A 290-amino-acid polypeptide reads, in one-letter code: MRMLVSKSIFAEPEPGYYAHTPVSLVICAPNMPDLLSHRLEDGFRAASRHAEALAKLQYRDPNAKDVLGFQLAFSTTKSYWDYVEEDDPECGQRFSKAMRAVTVNKLGDVPKLYPFNKLVDDGGIIVDVGGGMGQVAQSILSHWHGLGLKCIVQDKFASKSGSTHPDLEMQSYDFFSPQPVKGSAAYLFRHIFHDWPDDACITILKNTVEAMNPHQSRILICDQIMEETNPSTAAVLYDIDMMCLYGGKERTLSEWEELLKAADQRLEIKNVFRSPNQVSGILEVQLCCD.

S-adenosyl-L-methionine is bound at residue aspartate 155. Catalysis depends on histidine 194, which acts as the Proton acceptor.

This sequence belongs to the class I-like SAM-binding methyltransferase superfamily. Cation-independent O-methyltransferase family.

The protein operates within secondary metabolite biosynthesis. O-methyltransferase; part of the gene cluster that mediates the biosynthesis of the aspergillicins A and F, 2 cryptic cyclic hexa-depsipeptides. The hexamodular NRPS agiA catalyzes the condensation of the six amino acid residues including N-Me-L-O-Me-tyrosine, L-proline 1, L-proline 2, D-isoleucine, O-acetyl-threonine, and L-isoleucine. The starting condensation domain (C1) of agiA probably loads acetyl-CoA which is condensed on the N-terminus of threonine by the first module to yield O-acetyl-threonine. The second module then loads L-isoleucine. The epimerase (E) domain on module 2 is probably involved in the formation of the D-isoleucine moiety. Modules 3 and 4 further load 2 successive L-prolines. Module 5 is then involved in the condensation of O-Me-L-tyrosine produced by the O-methyltransferase agiB and the N-methyl transferase (NMeT) domain on module 5 probably catalyzes the N-methylation to yield the N-Me-L-O-Me-tyrosine moiety. The A domain of module 5 loads preferentially O-Me-L-tyrosine, but it can also accept L-phenylalanine, which leads to the production of aspergillicin G. Module 6 then loads the last residue, L-isoleucine. The C-terminal thiolesterase (TE) domain probably cyclizes the peptide using the hydroxy group from threonine to form the cyclic depsipeptide. This Aspergillus flavus (strain ATCC 200026 / FGSC A1120 / IAM 13836 / NRRL 3357 / JCM 12722 / SRRC 167) protein is O-methyltransferase agiB.